The chain runs to 487 residues: MGRLLAKMLFPLAMCLFVSAVSASDSPSSNEANPIVISSEAMDYDTNTITVREGKKLMVSCVFESDEQIHKSDLLWKQANGNNIDGESNPSLFSVILNEKGSKHRKTSLHFSSVHTRDTGLYTCTGRTAGGENFEKTIKLVVLPAIEWNDKDTVKGALLGEPITIDCGVKGPSGKEPMIQMTNGNGEPLDEEIWTIAGNEATIDSLKKEHAELTVSCITIEMHQETSKEEFPVVDRKDVNIEVYTLPEFETEESVQYTVIDNHVRDAIIYCNVTHSFPPVRHYTFYHGDEEIKMSDKFNIFVNVGVSQGAHLKIHNVNENDLGTYKCEANNIKAKSYHTIHLREANAPAEPKVTLIEDKRHSIIWKVESIDRDPDLPMTAVEIRHLRAGTAEASGVSDEDISDAYWKSHSIFMQRNIKDDGIYEINGLRHGHEYVWRFRQINEAGFGDSVVLRAKTLDDHDLEMMDSASDSKFPLALATLFFVCLFI.

An N-terminal signal peptide occupies residues 1 to 23 (MGRLLAKMLFPLAMCLFVSAVSA). 2 consecutive Ig-like domains span residues 34–139 (PIVI…KTIK) and 247–354 (PEFE…PKVT). 2 disulfide bridges follow: Cys61-Cys124 and Cys271-Cys327. The GPI-anchor amidated aspartate moiety is linked to residue Asp466. Positions 467–487 (SASDSKFPLALATLFFVCLFI) are cleaved as a propeptide — removed in mature form.

In terms of tissue distribution, expressed in the cholinergic motor neurons AS, VA and DA in the ventral nerve cord and in the mechanosensory ALM neurons in the midbody.

Its subcellular location is the cell projection. It localises to the axon. The protein localises to the synapse. The protein resides in the cell membrane. Cell surface protein which plays a role in the plasticity of cholinergic synapses at neuromuscular junctions and in the polarity of the mechanosensory neuron ALM, possibly by antagonizing Wnt signaling. The protein is Neuronal immunoglobulin domain-containing protein rig-3 of Caenorhabditis elegans.